Reading from the N-terminus, the 499-residue chain is RNA polymerase sigma factor SigA (499 aa).

Basic residues-rich tracts occupy residues 1 to 12 and 77 to 87; these read MSSPKKNFKKPQ and KKRRGRKPKHA. Disordered regions lie at residues 1 to 25 and 68 to 89; these read MSSP…LNEE and QENK…HAPL. The sigma-70 factor domain-2 stretch occupies residues 252 to 322; sequence LVTSNLRLVV…TRAIADQART (71 aa). The Interaction with polymerase core subunit RpoC signature appears at 276–279; sequence DLIQ. Positions 331–412 are sigma-70 factor domain-3; sequence ETINRLAKAE…DTDAQMPDEF (82 aa). Positions 425 to 480 are sigma-70 factor domain-4; the sequence is LLNNCLSEQEELIVRMRIGMPPYNETKTLDEVSQKIKIPREKIRQIETKAIRKLRQ. The segment at residues 453-472 is a DNA-binding region (H-T-H motif); that stretch reads LDEVSQKIKIPREKIRQIET.

The protein belongs to the sigma-70 factor family. RpoD/SigA subfamily. Interacts transiently with the RNA polymerase catalytic core.

Its subcellular location is the cytoplasm. Functionally, sigma factors are initiation factors that promote the attachment of RNA polymerase to specific initiation sites and are then released. This sigma factor is the primary sigma factor during exponential growth. The chain is RNA polymerase sigma factor SigA from Mycoplasma pneumoniae (strain ATCC 29342 / M129 / Subtype 1) (Mycoplasmoides pneumoniae).